Here is an 866-residue protein sequence, read N- to C-terminus: Protein translocase subunit SecA (866 aa).

Residues Gln87, 105–109 (GEGKT), and Asp514 contribute to the ATP site. The tract at residues 819-858 (VSPIGTPSSEGGGETSGADTYSNKKIGRNDPCPCGSGKKY) is disordered. Positions 850, 852, 861, and 862 each coordinate Zn(2+).

Belongs to the SecA family. Monomer and homodimer. Part of the essential Sec protein translocation apparatus which comprises SecA, SecYEG and auxiliary proteins SecDF. Other proteins may also be involved. Zn(2+) is required as a cofactor.

It is found in the cell inner membrane. The protein localises to the cytoplasm. It carries out the reaction ATP + H2O + cellular proteinSide 1 = ADP + phosphate + cellular proteinSide 2.. In terms of biological role, part of the Sec protein translocase complex. Interacts with the SecYEG preprotein conducting channel. Has a central role in coupling the hydrolysis of ATP to the transfer of proteins into and across the cell membrane, serving as an ATP-driven molecular motor driving the stepwise translocation of polypeptide chains across the membrane. The sequence is that of Protein translocase subunit SecA from Elusimicrobium minutum (strain Pei191).